Consider the following 472-residue polypeptide: Aspartyl/glutamyl-tRNA(Asn/Gln) amidotransferase subunit B (472 aa).

This sequence belongs to the GatB/GatE family. GatB subfamily. Heterotrimer of A, B and C subunits.

The enzyme catalyses L-glutamyl-tRNA(Gln) + L-glutamine + ATP + H2O = L-glutaminyl-tRNA(Gln) + L-glutamate + ADP + phosphate + H(+). It catalyses the reaction L-aspartyl-tRNA(Asn) + L-glutamine + ATP + H2O = L-asparaginyl-tRNA(Asn) + L-glutamate + ADP + phosphate + 2 H(+). In terms of biological role, allows the formation of correctly charged Asn-tRNA(Asn) or Gln-tRNA(Gln) through the transamidation of misacylated Asp-tRNA(Asn) or Glu-tRNA(Gln) in organisms which lack either or both of asparaginyl-tRNA or glutaminyl-tRNA synthetases. The reaction takes place in the presence of glutamine and ATP through an activated phospho-Asp-tRNA(Asn) or phospho-Glu-tRNA(Gln). The sequence is that of Aspartyl/glutamyl-tRNA(Asn/Gln) amidotransferase subunit B from Campylobacter jejuni subsp. doylei (strain ATCC BAA-1458 / RM4099 / 269.97).